Here is a 361-residue protein sequence, read N- to C-terminus: Phosphoribosylformylglycinamidine cyclo-ligase (361 aa).

Belongs to the AIR synthase family.

The protein resides in the cytoplasm. The catalysed reaction is 2-formamido-N(1)-(5-O-phospho-beta-D-ribosyl)acetamidine + ATP = 5-amino-1-(5-phospho-beta-D-ribosyl)imidazole + ADP + phosphate + H(+). It participates in purine metabolism; IMP biosynthesis via de novo pathway; 5-amino-1-(5-phospho-D-ribosyl)imidazole from N(2)-formyl-N(1)-(5-phospho-D-ribosyl)glycinamide: step 2/2. The sequence is that of Phosphoribosylformylglycinamidine cyclo-ligase from Bartonella henselae (strain ATCC 49882 / DSM 28221 / CCUG 30454 / Houston 1) (Rochalimaea henselae).